The primary structure comprises 334 residues: Protein-methionine-sulfoxide reductase catalytic subunit MsrP (334 aa).

The tat-type signal signal peptide spans 1–44 (MKKNQFLKESDVTAESVFFMKRRQVLKALGISAAALSLPHAAHA). Mo-molybdopterin contacts are provided by residues Asn-88, 91–92 (YE), Cys-146, Thr-181, Asn-233, Arg-238, and 249–251 (GIK).

The protein belongs to the MsrP family. Heterodimer of a catalytic subunit (MsrP) and a heme-binding subunit (MsrQ). Requires Mo-molybdopterin as cofactor. In terms of processing, predicted to be exported by the Tat system. The position of the signal peptide cleavage has not been experimentally proven.

It localises to the periplasm. The enzyme catalyses L-methionyl-[protein] + a quinone + H2O = L-methionyl-(S)-S-oxide-[protein] + a quinol. It catalyses the reaction L-methionyl-[protein] + a quinone + H2O = L-methionyl-(R)-S-oxide-[protein] + a quinol. Part of the MsrPQ system that repairs oxidized periplasmic proteins containing methionine sulfoxide residues (Met-O), using respiratory chain electrons. Thus protects these proteins from oxidative-stress damage caused by reactive species of oxygen and chlorine generated by the host defense mechanisms. MsrPQ is essential for the maintenance of envelope integrity under bleach stress, rescuing a wide series of structurally unrelated periplasmic proteins from methionine oxidation, including the primary periplasmic chaperone SurA and the lipoprotein Pal. The catalytic subunit MsrP is non-stereospecific, being able to reduce both (R-) and (S-) diastereoisomers of methionine sulfoxide. In Escherichia coli O9:H4 (strain HS), this protein is Protein-methionine-sulfoxide reductase catalytic subunit MsrP.